Reading from the N-terminus, the 196-residue chain is Large ribosomal subunit protein mL66 (196 aa).

The transit peptide at 1–34 directs the protein to the mitochondrion; the sequence is MAALRRLVSGCGRQLQAFLAGPAATGWLWLPARG.

This sequence belongs to the bacterial ribosomal protein bS18 family. Mitochondrion-specific ribosomal protein mL66 subfamily. As to quaternary structure, component of the mitochondrial ribosome small subunit (28S) which comprises a 12S rRNA and about 30 distinct proteins.

The protein localises to the mitochondrion. The sequence is that of Large ribosomal subunit protein mL66 (Mrps18a) from Mus musculus (Mouse).